The chain runs to 105 residues: Heat shock protein HspQ (105 aa).

Residues G75–N105 are disordered.

The protein belongs to the HspQ family.

It is found in the cytoplasm. In terms of biological role, involved in the degradation of certain denaturated proteins, including DnaA, during heat shock stress. This chain is Heat shock protein HspQ, found in Serratia proteamaculans (strain 568).